The primary structure comprises 856 residues: Increased rDNA silencing protein 4 (856 aa).

Disordered stretches follow at residues 1 to 204 (MSAS…EPKS), 230 to 563 (KQEE…PTPE), and 589 to 672 (TSLE…DEDL). Low complexity-rich tracts occupy residues 12–42 (GPAS…ATLA), 67–84 (VPTP…RTVG), and 111–130 (SRVV…AGRT). Over residues 152 to 162 (HVEERANDHAP) the composition is skewed to basic and acidic residues. Residues 194 to 204 (ASAKPSSEPKS) are compositionally biased toward low complexity. Positions 239 to 254 (KKKKKKKPRPASKTQH) are enriched in basic residues. 2 stretches are compositionally biased toward polar residues: residues 255–275 (HQTL…ENQC) and 303–315 (SLST…SSTG). A compositionally biased stretch (basic and acidic residues) spans 329–347 (GETRNRNGDVRDKPSREGG). Composition is skewed to polar residues over residues 396–410 (PVSQ…TIIS), 451–468 (RVVS…QSAE), and 478–488 (RNSTSSDETFV). Over residues 503–514 (KELERVRPRLDR) the composition is skewed to basic and acidic residues. Over residues 517–535 (TSTSSRASRVSTPASVRSP) the composition is skewed to low complexity. Positions 603-620 (RRGHRHHHLPHPHLRHRT) are enriched in basic residues. Over residues 644–654 (PSRQTEHTQPA) the composition is skewed to polar residues. The 90-residue stretch at 743–832 (DSLGQVDLSR…EGVWESAMDR (90 aa)) folds into the EH domain.

Belongs to the IRS4 family.

In terms of biological role, positive regulator of phosphatidylinositol 4,5-bisphosphate turnover and negatively regulates signaling through the cell integrity pathway. Involved in rDNA silencing. This Neurospora crassa (strain ATCC 24698 / 74-OR23-1A / CBS 708.71 / DSM 1257 / FGSC 987) protein is Increased rDNA silencing protein 4 (irs-4).